The chain runs to 594 residues: Zinc finger protein 703 (594 aa).

Polar residues predominate over residues 1–14; that stretch reads MSDSPAGSNPRTPE. Disordered stretches follow at residues 1-37, 100-298, and 345-370; these read MSDS…VPAV, TCSQ…GHVA, and LVGG…LTGA. The residue at position 2 (serine 2) is an N-acetylserine. A compositionally biased stretch (gly residues) spans 17–30; the sequence is GSGGGSSSGGGGGK. 3 stretches are compositionally biased toward low complexity: residues 134 to 145, 177 to 191, and 212 to 225; these read RSAPGAASAAAA, GSSS…SSSS, and GASV…SSPG. A compositionally biased stretch (basic and acidic residues) spans 246–256; the sequence is ELDKKEQEAKP. Serine 257 carries the post-translational modification Phosphoserine. Residues 345-356 are compositionally biased toward gly residues; the sequence is LVGGQLSGGLGL. The C2H2-type zinc finger occupies 460-488; that stretch reads HSCNWVAASGPCDKRFATSEELLSHLRTH. Residue arginine 584 is modified to Omega-N-methylarginine.

Belongs to the Elbow/Noc family. As to quaternary structure, interacts with DCAF7 and PHB2. Interacts with TLE4; increases transcriptional repression. In terms of tissue distribution, expressed in mammary epithelium.

Its subcellular location is the nucleus. It is found in the cytoplasm. Functionally, transcriptional corepressor which does not bind directly to DNA and may regulate transcription through recruitment of histone deacetylases to gene promoters. Regulates cell adhesion, migration and proliferation. May be required for segmental gene expression during hindbrain development. The polypeptide is Zinc finger protein 703 (Znf703) (Mus musculus (Mouse)).